Here is a 152-residue protein sequence, read N- to C-terminus: Nucleoside diphosphate kinase (152 aa).

Lys11, Phe59, Arg87, Thr93, Arg104, and Asn114 together coordinate ATP. The active-site Pros-phosphohistidine intermediate is His117.

Belongs to the NDK family. In terms of assembly, homotetramer. Requires Mg(2+) as cofactor.

The protein resides in the cytoplasm. The catalysed reaction is a 2'-deoxyribonucleoside 5'-diphosphate + ATP = a 2'-deoxyribonucleoside 5'-triphosphate + ADP. It carries out the reaction a ribonucleoside 5'-diphosphate + ATP = a ribonucleoside 5'-triphosphate + ADP. Its function is as follows. Major role in the synthesis of nucleoside triphosphates other than ATP. The ATP gamma phosphate is transferred to the NDP beta phosphate via a ping-pong mechanism, using a phosphorylated active-site intermediate. This is Nucleoside diphosphate kinase from Prochlorococcus marinus (strain AS9601).